The sequence spans 141 residues: Large ribosomal subunit protein uL11 (141 aa).

This sequence belongs to the universal ribosomal protein uL11 family. In terms of assembly, part of the ribosomal stalk of the 50S ribosomal subunit. Interacts with L10 and the large rRNA to form the base of the stalk. L10 forms an elongated spine to which L12 dimers bind in a sequential fashion forming a multimeric L10(L12)X complex. In terms of processing, one or more lysine residues are methylated.

Functionally, forms part of the ribosomal stalk which helps the ribosome interact with GTP-bound translation factors. This chain is Large ribosomal subunit protein uL11, found in Prochlorococcus marinus (strain MIT 9215).